The following is a 298-amino-acid chain: Glycine--tRNA ligase alpha subunit (298 aa).

The protein belongs to the class-II aminoacyl-tRNA synthetase family. In terms of assembly, tetramer of two alpha and two beta subunits.

It is found in the cytoplasm. It catalyses the reaction tRNA(Gly) + glycine + ATP = glycyl-tRNA(Gly) + AMP + diphosphate. The protein is Glycine--tRNA ligase alpha subunit of Helicobacter pylori (strain HPAG1).